The primary structure comprises 543 residues: Ipecoside beta-D-glucosidase IpeGLU1 (543 aa).

Residues Q36, H140, N185–E186, Y350, E422, W471, and F487 contribute to the a beta-D-glucoside site. The Proton donor role is filled by E186. E422 (nucleophile) is an active-site residue.

Belongs to the glycosyl hydrolase 1 family. In terms of tissue distribution, expressed in roots.

The protein localises to the cytoplasm. It localises to the cytosol. It carries out the reaction deacetylipecoside + H2O = deacetylipecoside aglycone + D-glucose. It catalyses the reaction deacetylisoipecoside + H2O = deacetylisoipecoside aglycone + D-glucose. The catalysed reaction is 6-O-methyldeacetylipecoside + H2O = 6-O-methyldeacetylipecoside aglycone + D-glucose. The enzyme catalyses 6-O-methyldeacetylisoipecoside + H2O = 6-O-methyldeacetylisoipecoside aglycone + D-glucose. It carries out the reaction ipecoside + H2O = ipecoside aglycone + D-glucose. It catalyses the reaction 3alpha(S)-strictosidine + H2O = strictosidine aglycone + D-glucose. Its pathway is alkaloid biosynthesis. With respect to regulation, inhibited by Cu(2+), Fe(2+) and Zn(2+). Beta-glucosidase involved in the biosynthesis of ipecac and benzylisoquinoline monoterpenoid-isoquinoline alkaloids natural products, starting by the condensation of dopamine and secologanin, and including emetine and cephaeline, drugs used both as anti-protozoal (e.g. treatment of ameobiasis) and as emetic agents. In response to pathogen and herbivore attack, triggers the release of toxic ipecoside aglycon to trigger defense responses. Catalyzes deglucosylation both on (1S)-diastereomer and (1R)-diastereomer substrates, including ipecoside, the main alkaloidal glucoside. Also active on N-deacetylisoipecoside, 6-O-methyl-N-deacetylisoipecoside, 6-O-methyl-N-deacetylipecoside and N-deacetylipecoside. This chain is Ipecoside beta-D-glucosidase IpeGLU1, found in Carapichea ipecacuanha (Ipecac).